Here is a 170-residue protein sequence, read N- to C-terminus: Putative pre-16S rRNA nuclease (170 aa).

The tract at residues 1–29 (MVAASHRSPDRPGDPEGLEPGTGRGRRLG) is disordered.

This sequence belongs to the YqgF nuclease family.

It is found in the cytoplasm. Functionally, could be a nuclease involved in processing of the 5'-end of pre-16S rRNA. The sequence is that of Putative pre-16S rRNA nuclease from Mycobacterium ulcerans (strain Agy99).